A 430-amino-acid polypeptide reads, in one-letter code: Arrestin-related trafficking adapter 10 (430 aa).

Positions 55–75 (AEADRHSSRLPQDPQTQYTKE) are disordered. The span at 63 to 72 (RLPQDPQTQY) shows a compositional bias: polar residues.

It belongs to the ART10 family.

The protein resides in the cytoplasm. Its function is as follows. May regulate endocytosis by recruiting RSP5 ubiquitin ligase activity to specific plasma membrane proteins in response to extracellular stimuli. The sequence is that of Arrestin-related trafficking adapter 10 (ART10) from Eremothecium gossypii (strain ATCC 10895 / CBS 109.51 / FGSC 9923 / NRRL Y-1056) (Yeast).